The following is a 334-amino-acid chain: UL-16 binding protein 5 (334 aa).

The signal sequence occupies residues M1 to T25. Residues G26–R223 lie on the Extracellular side of the membrane. An MHC class I alpha-1 like region spans residues D29–E117. A disulfide bridge links C50 with C66. An N-linked (GlcNAc...) asparagine glycan is attached at N82. An MHC class I alpha-2 like region spans residues P118–G210. C127 and C190 form a disulfide bridge. A lipid anchor (GPI-anchor amidated glycine) is attached at G218. Residues T219–S334 constitute a propeptide, removed in mature form. The helical transmembrane segment at A224–S243 threads the bilayer. The Cytoplasmic segment spans residues R244–S334.

The protein belongs to the MHC class I family. Interacts with KLRK1/NKG2D. In terms of assembly, (Microbial infection) In CMV-infected cells, interacts with the viral glycoprotein UL16; this interaction causes RAET1G retention in the endoplasmic reticulum and cis-Golgi and prevents binding to and activation of KLRK1/NKG2D, providing CMV with an immune evasion mechanism. Post-translationally, the functional form is cleaved C-terminally of the GPI-anchor and yields a 28 kDa protein. Isoform 1 is highly expressed in colon and in a number of tumor cell lines and highly restricted in normal tissues. Both isoforms are frequently expressed in cell lines derived from epithelial cancers, and in primary breast cancers.

The protein resides in the cell membrane. Its subcellular location is the endoplasmic reticulum. It localises to the secreted. Its function is as follows. Binds and activates the KLRK1/NKG2D receptor, mediating natural killer cell cytotoxicity. In terms of biological role, down-regulates the expression of KLRK1 and stimulates natural killer cells to secrete IFNG. Stimulates natural killer cells to secrete IFNG. The sequence is that of UL-16 binding protein 5 from Homo sapiens (Human).